Reading from the N-terminus, the 462-residue chain is Cysteine--tRNA ligase (462 aa).

Position 24 (cysteine 24) interacts with Zn(2+). Positions proline 26–histidine 36 match the 'HIGH' region motif. 3 residues coordinate Zn(2+): cysteine 199, histidine 224, and glutamate 228. A 'KMSKS' region motif is present at residues lysine 256 to serine 260. Lysine 259 contributes to the ATP binding site.

It belongs to the class-I aminoacyl-tRNA synthetase family. As to quaternary structure, monomer. Zn(2+) serves as cofactor.

The protein resides in the cytoplasm. The catalysed reaction is tRNA(Cys) + L-cysteine + ATP = L-cysteinyl-tRNA(Cys) + AMP + diphosphate. This chain is Cysteine--tRNA ligase, found in Campylobacter jejuni subsp. jejuni serotype O:23/36 (strain 81-176).